The following is a 2414-amino-acid chain: Centrosome-associated protein CEP250 (2414 aa).

Coiled coils occupy residues 91–153 (EEPN…ELVR) and 248–357 (LVAK…VEEE). 7 disordered regions span residues 356–384 (EEDTVTQSSGHEDSLQSDCNGLSQFDPQD), 672–707 (AEEAGAELQAELRGTREEKEELKDKLSEAHHQQETA), 1191–1212 (SRPELRGGGDSAPTLWGPDPDQ), 1269–1303 (EAQKSQVHSELQDLQRQLSQSQEEKSKWEGRQNSL), 2050–2071 (AGARRSQENGIQEKQSLEQERQ), 2194–2238 (ALEE…KERL), and 2275–2317 (RERR…GSSD). The span at 371-381 (QSDCNGLSQFD) shows a compositional bias: polar residues. Residues 400–1165 (QQAVQDLRQQ…QLEALVAEQQ (766 aa)) adopt a coiled-coil conformation. Basic and acidic residues predominate over residues 684 to 704 (RGTREEKEELKDKLSEAHHQQ). Coiled coils occupy residues 1237–2200 (LQKL…EQQS) and 2231–2290 (GVEE…ASRA). A compositionally biased stretch (low complexity) spans 1280 to 1289 (QDLQRQLSQS). A compositionally biased stretch (polar residues) spans 2196 to 2209 (EEQQSGGPHSTSRA). Over residues 2275-2286 (RERRKLKRDSVR) the composition is skewed to basic and acidic residues. The residue at position 2292 (Ser-2292) is a Phosphoserine. The segment covering 2305 to 2317 (QQDGRGSQRGSSD) has biased composition (low complexity). Residues 2320–2345 (LVVELQREVALLRAQLALERKQRQDY) adopt a coiled-coil conformation. Residues Ser-2389 and Ser-2393 each carry the phosphoserine; by NEK2 modification. The segment at 2390-2414 (LNQSLTSPGPCLLHPSLDTTQNTHR) is disordered.

Monomer and homodimer. Forms a complex in vitro with both NEK2 kinase and the PPP1CC catalytic subunit of protein phosphatase 1 (PP1). Interacts with CEP135. Interacts with CROCC/rootletin. Interacts with CNTLN. Interacts with NIN (via C-terminus). Post-translationally, differentially phosphorylated during cell cycle. Phosphorylation may regulate association/dissociation from centrosome. During M phase of mitosis, C-terminal part is phosphorylated by NEK2, suggesting that it may trigger the dissociation from the mitotic centrosome. Dephosphorylated in vitro by the PP1 phosphatase. In terms of tissue distribution, expressed in the retina.

It is found in the cytoplasm. The protein resides in the perinuclear region. It localises to the cytoskeleton. The protein localises to the microtubule organizing center. Its subcellular location is the centrosome. It is found in the centriole. The protein resides in the cilium basal body. It localises to the cell projection. The protein localises to the cilium. Its subcellular location is the photoreceptor outer segment. It is found in the photoreceptor inner segment. Functionally, plays an important role in centrosome cohesion during interphase. Recruits CCDC102B to the proximal ends of centrioles. Maintains centrosome cohesion by forming intercentriolar linkages. Accumulates at the proximal end of each centriole, forming supramolecular assemblies with viscous material properties that promote organelle cohesion. May be involved in ciliogenesis. The chain is Centrosome-associated protein CEP250 (Cep250) from Mus musculus (Mouse).